A 468-amino-acid chain; its full sequence is Lipase 1 (468 aa).

The N-terminal stretch at 1–16 is a signal peptide; it reads MRGIAVFLAFISLIFA. An N-linked (GlcNAc...) asparagine glycan is attached at Asn-79. A disulfide bond links Cys-112 and Cys-285. The active-site Charge relay system is the Ser-196. 2 N-linked (GlcNAc...) asparagine glycosylation sites follow: Asn-231 and Asn-319. Active-site charge relay system residues include Asp-348 and His-381. Cys-364 and Cys-409 are joined by a disulfide. Asn-417, Asn-422, and Asn-451 each carry an N-linked (GlcNAc...) asparagine glycan.

The protein belongs to the AB hydrolase superfamily. Lipase family. Class Lip subfamily.

It is found in the secreted. The catalysed reaction is a triacylglycerol + H2O = a diacylglycerol + a fatty acid + H(+). Secreted lipase that is able to hydrolyze both the neutral triacylglycerols and the monopalmitate ester Tween 40, allowing the use of hydrolyzed products as carbon sources. Has broad lipolytic activity, which may be important for colonization and subsequent infection, therefore contributing to the persistence and virulence in human tissue. This chain is Lipase 1, found in Candida albicans (strain SC5314 / ATCC MYA-2876) (Yeast).